The sequence spans 1086 residues: Lysine-specific demethylase 4B (1086 aa).

The JmjN domain maps to 15–57; it reads IMTFRPTMDEFRDFNRYVAYIESQGAHRAGLAKIIPPKEWKPR. Position 133 (tyrosine 133) interacts with 2-oxoglutarate. Positions 146–309 constitute a JmjC domain; sequence VAQWNIGNLR…YGKVATQCTC (164 aa). The Fe cation site is built by histidine 189 and glutamate 191. 2-oxoglutarate-binding residues include asparagine 199 and lysine 207. 2 residues coordinate Zn(2+): cysteine 235 and histidine 241. Lysine 242 lines the 2-oxoglutarate pocket. Residue histidine 277 participates in Fe cation binding. Zn(2+) is bound by residues cysteine 307 and cysteine 309. Residues 379–395 show a composition bias toward basic and acidic residues; sequence SRPWRKAEEERRREPTR. Disordered regions lie at residues 379-536 and 575-624; these read SRPW…PPGA and PMEL…LSVV. The span at 401-410 shows a compositional bias: basic residues; that stretch reads SHRRRSQPKK. Acidic residues predominate over residues 441–450; sequence MPEDEEEEEL. A compositionally biased stretch (basic and acidic residues) spans 456 to 467; sequence HEAEGVEEDGRG. A compositionally biased stretch (basic residues) spans 468–480; sequence KPRPTKARNKKKT. Residues 512-522 are compositionally biased toward low complexity; that stretch reads GPAMGPMAAEG. Polar residues predominate over residues 585-597; that stretch reads QAQAGDSQGTTPF. Residue lysine 599 is modified to N6-acetyllysine. The PHD-type 1 zinc finger occupies 719–777; it reads MCFTSSGENTEPLPANSYVGEDGTSPLISCAHCCLQVHASCYGVRPELAKEGWTCSRCA. A C2HC pre-PHD-type zinc finger spans residues 782-815; that stretch reads TAECCLCNLRGGALQRTTEHRWIHVICAIAVPEV. Residues 838-895 form a PHD-type 2 zinc finger; that stretch reads LKCIYCRKRMKRVSGACIQCSYEHCSTSFHVTCAHAAGVLMEPDDWPYVVSITCLKHR. 2 consecutive Tudor domains span residues 905-962 and 963-1019; these read RTVS…CLRL and GPPP…EELP. Positions 1024-1043 are disordered; sequence SRLSLSTGTPQEPSFSGDDV. Polar residues predominate over residues 1026-1037; it reads LSLSTGTPQEPS.

This sequence belongs to the JHDM3 histone demethylase family. Requires Fe(2+) as cofactor.

The protein localises to the nucleus. The enzyme catalyses N(6),N(6),N(6)-trimethyl-L-lysyl(9)-[histone H3] + 2 2-oxoglutarate + 2 O2 = N(6)-methyl-L-lysyl(9)-[histone H3] + 2 formaldehyde + 2 succinate + 2 CO2. Functionally, histone demethylase that specifically demethylates 'Lys-9' of histone H3, thereby playing a role in histone code. Does not demethylate histone H3 'Lys-4', H3 'Lys-27', H3 'Lys-36' nor H4 'Lys-20'. Only able to demethylate trimethylated H3 'Lys-9', with a weaker activity than KDM4A, KDM4C and KDM4D. Demethylation of Lys residue generates formaldehyde and succinate. Plays a critical role in the development of the central nervous system (CNS). The chain is Lysine-specific demethylase 4B (Kdm4b) from Mus musculus (Mouse).